We begin with the raw amino-acid sequence, 153 residues long: Prostaglandin E synthase (153 aa).

The Lumenal portion of the chain corresponds to methionine 1–alanine 13. Residues leucine 14–lysine 42 traverse the membrane as a helical segment. Arginine 39 serves as a coordination point for glutathione. Residues lysine 43 to arginine 61 lie on the Cytoplasmic side of the membrane. Residues serine 62–serine 91 form a helical membrane-spanning segment. Arginine 74 to glutamate 78 contributes to the glutathione binding site. Over phenylalanine 92–aspartate 96 the chain is Lumenal. Residues proline 97–glycine 120 form a helical membrane-spanning segment. Glutathione-binding residues include histidine 114 and tyrosine 118. Residues lysine 121–alanine 124 lie on the Cytoplasmic side of the membrane. The helical transmembrane segment at proline 125–leucine 153 threads the bilayer. Glutathione is bound at residue arginine 127–tyrosine 131.

This sequence belongs to the MAPEG family. Homotrimer. It depends on glutathione as a cofactor.

It localises to the membrane. The protein resides in the cytoplasm. Its subcellular location is the perinuclear region. The catalysed reaction is prostaglandin H2 = prostaglandin E2. It catalyses the reaction 2-glyceryl-prostaglandin H2 = 2-glyceryl-prostaglandin E2. The enzyme catalyses prostaglandin G2 = (15S)-15-hydroperoxy-prostaglandin E2. It carries out the reaction 1-chloro-2,4-dinitrobenzene + glutathione = 2,4-dinitrophenyl-S-glutathione + chloride + H(+). The catalysed reaction is (5S)-hydroperoxy-(6E,8Z,11Z,14Z)-eicosatetraenoate + 2 glutathione = (5S)-hydroxy-(6E,8Z,11Z,14Z)-eicosatetraenoate + glutathione disulfide + H2O. It functions in the pathway lipid metabolism; prostaglandin biosynthesis. Functionally, terminal enzyme of the cyclooxygenase (COX)-2-mediated prostaglandin E2 (PGE2) biosynthetic pathway. Catalyzes the glutathione-dependent oxidoreduction of prostaglandin endoperoxide H2 (PGH2) to prostaglandin E2 (PGE2) in response to inflammatory stimuli. Plays a key role in inflammation response, fever and pain. Also catalyzes the oxidoreduction of endocannabinoids into prostaglandin glycerol esters and PGG2 into 15-hydroperoxy-PGE2. In addition, displays low glutathione transferase and glutathione-dependent peroxidase activities, toward 1-chloro-2,4-dinitrobenzene and 5-hydroperoxyicosatetraenoic acid (5-HPETE), respectively. The polypeptide is Prostaglandin E synthase (PTGES) (Canis lupus familiaris (Dog)).